Here is a 37-residue protein sequence, read N- to C-terminus: Large ribosomal subunit protein bL36B (37 aa).

Belongs to the bacterial ribosomal protein bL36 family.

The protein is Large ribosomal subunit protein bL36B of Kineococcus radiotolerans (strain ATCC BAA-149 / DSM 14245 / SRS30216).